Consider the following 422-residue polypeptide: UDP-N-acetylglucosamine 1-carboxyvinyltransferase (422 aa).

22-23 (KN) serves as a coordination point for phosphoenolpyruvate. R93 lines the UDP-N-acetyl-alpha-D-glucosamine pocket. The active-site Proton donor is the C117. Position 117 is a 2-(S-cysteinyl)pyruvic acid O-phosphothioketal (C117). UDP-N-acetyl-alpha-D-glucosamine is bound by residues 122 to 126 (RPVDQ), D309, and I331.

Belongs to the EPSP synthase family. MurA subfamily.

It is found in the cytoplasm. It carries out the reaction phosphoenolpyruvate + UDP-N-acetyl-alpha-D-glucosamine = UDP-N-acetyl-3-O-(1-carboxyvinyl)-alpha-D-glucosamine + phosphate. It functions in the pathway cell wall biogenesis; peptidoglycan biosynthesis. Its function is as follows. Cell wall formation. Adds enolpyruvyl to UDP-N-acetylglucosamine. This Delftia acidovorans (strain DSM 14801 / SPH-1) protein is UDP-N-acetylglucosamine 1-carboxyvinyltransferase.